The chain runs to 608 residues: Prolactin receptor (608 aa).

Positions 1 to 19 (MSSALAYMLLVLSISLLNG) are cleaved as a signal peptide. Residues 20 to 229 (QSPPGKPEIH…EIPNDFTLKD (210 aa)) are Extracellular-facing. 2 consecutive Fibronectin type-III domains span residues 22–122 (PPGK…IVEP) and 124–224 (PPRN…IPND). Cys-31 and Cys-41 are disulfide-bonded. N-linked (GlcNAc...) asparagine glycosylation is present at Asn-54. Residues Cys-70 and Cys-81 are joined by a disulfide bond. N-linked (GlcNAc...) asparagine glycans are attached at residues Asn-99 and Asn-127. Zn(2+)-binding residues include Asp-206 and His-207. The WSXWS motif signature appears at 210 to 214 (WSRWG). A helical transmembrane segment spans residues 230–253 (TTVWIIVAVLSAVICLIMVWAVAL). At 254–608 (KGYSMMTCIF…DPTCFMHSFH (355 aa)) the chain is on the cytoplasmic side. A Box 1 motif motif is present at residues 262-270 (IFPPVPGPK). Disordered regions lie at residues 317-355 (DERL…HSLL), 377-419 (KPEN…TRRS), and 466-487 (GAKS…EKGP). Residues 318 to 327 (ERLMPSHSKE) are compositionally biased toward basic and acidic residues. Residues 345 to 354 (GHGSYDSHSL) are compositionally biased toward low complexity. Residues 398–408 (CHTDTSKSTTW) show a composition bias toward polar residues.

This sequence belongs to the type I cytokine receptor family. Type 1 subfamily. Interacts with SMARCA1. Interacts with NEK3 and VAV2 and this interaction is prolactin-dependent.

The protein resides in the membrane. Its function is as follows. This is a receptor for the anterior pituitary hormone prolactin. The sequence is that of Prolactin receptor (Prlr) from Mus musculus (Mouse).